A 688-amino-acid polypeptide reads, in one-letter code: G protein-coupled receptor kinase 3 (688 aa).

The N-terminal stretch occupies residues 1–190 (MADLEAVLAD…ELNIHLTMND (190 aa)). The 122-residue stretch at 54–175 (TFDKIFNQRI…MESDKFTRFC (122 aa)) folds into the RGS domain. The region spanning 191–453 (FSVHRIIGRG…AQELKTHDFF (263 aa)) is the Protein kinase domain. ATP contacts are provided by residues 197-205 (IGRGGFGEV) and Lys220. The Proton acceptor role is filled by Asp317. The 68-residue stretch at 454–521 (RGIDWQHVYL…VISERWQQEV (68 aa)) folds into the AGC-kinase C-terminal domain. Positions 558 to 652 (DCIVHGYMLK…WKKELTETFM (95 aa)) constitute a PH domain.

It belongs to the protein kinase superfamily. AGC Ser/Thr protein kinase family. GPRK subfamily. In terms of assembly, interacts with GIT1. Ubiquitinated. In terms of tissue distribution, ubiquitous; brain, spleen &gt; heart, lung &gt; kidney.

It is found in the postsynapse. The protein localises to the presynapse. The enzyme catalyses [beta-adrenergic receptor] + ATP = [beta-adrenergic receptor]-phosphate + ADP + H(+). Specifically phosphorylates the agonist-occupied form of the beta-adrenergic and closely related receptors. This chain is G protein-coupled receptor kinase 3, found in Bos taurus (Bovine).